The following is a 239-amino-acid chain: Ubiquinone biosynthesis O-methyltransferase (239 aa).

4 residues coordinate S-adenosyl-L-methionine: R42, G62, D83, and M127.

Belongs to the methyltransferase superfamily. UbiG/COQ3 family.

The catalysed reaction is a 3-demethylubiquinol + S-adenosyl-L-methionine = a ubiquinol + S-adenosyl-L-homocysteine + H(+). It catalyses the reaction a 3-(all-trans-polyprenyl)benzene-1,2-diol + S-adenosyl-L-methionine = a 2-methoxy-6-(all-trans-polyprenyl)phenol + S-adenosyl-L-homocysteine + H(+). The protein operates within cofactor biosynthesis; ubiquinone biosynthesis. In terms of biological role, O-methyltransferase that catalyzes the 2 O-methylation steps in the ubiquinone biosynthetic pathway. The protein is Ubiquinone biosynthesis O-methyltransferase of Pectobacterium carotovorum subsp. carotovorum (strain PC1).